Consider the following 248-residue polypeptide: uncharacterized protein (248 aa).

9 to 33 (IITGASSGIGKATALLLAEKGAKLV) is an NADP(+) binding site. Residue Ser141 participates in substrate binding. Tyr154 serves as the catalytic Proton acceptor.

This sequence belongs to the short-chain dehydrogenases/reductases (SDR) family.

This is an uncharacterized protein from Listeria monocytogenes serovar 1/2a (strain ATCC BAA-679 / EGD-e).